The primary structure comprises 259 residues: Putative protein phosphatase (259 aa).

The 248-residue stretch at 8-255 (LFASLSKKGP…DNITLNLINL (248 aa)) folds into the PPM-type phosphatase domain.

The catalysed reaction is O-phospho-L-seryl-[protein] + H2O = L-seryl-[protein] + phosphate. It catalyses the reaction O-phospho-L-threonyl-[protein] + H2O = L-threonyl-[protein] + phosphate. The polypeptide is Putative protein phosphatase (Mycoplasma pneumoniae (strain ATCC 29342 / M129 / Subtype 1) (Mycoplasmoides pneumoniae)).